Here is a 1405-residue protein sequence, read N- to C-terminus: DNA-directed RNA polymerase subunit beta' (1405 aa).

Zn(2+)-binding residues include Cys70, Cys72, Cys85, and Cys88. Mg(2+) contacts are provided by Asp460, Asp462, and Asp464. Residues Cys814, Cys888, Cys895, and Cys898 each contribute to the Zn(2+) site.

Belongs to the RNA polymerase beta' chain family. The RNAP catalytic core consists of 2 alpha, 1 beta, 1 beta' and 1 omega subunit. When a sigma factor is associated with the core the holoenzyme is formed, which can initiate transcription. Mg(2+) is required as a cofactor. It depends on Zn(2+) as a cofactor.

It catalyses the reaction RNA(n) + a ribonucleoside 5'-triphosphate = RNA(n+1) + diphosphate. In terms of biological role, DNA-dependent RNA polymerase catalyzes the transcription of DNA into RNA using the four ribonucleoside triphosphates as substrates. This Shewanella baltica (strain OS223) protein is DNA-directed RNA polymerase subunit beta'.